Here is an 83-residue protein sequence, read N- to C-terminus: Cytochrome c oxidase subunit 7A2, mitochondrial (83 aa).

The transit peptide at 1–23 (MLRNLLALRQIAQRTISTTSRRH) directs the protein to the mitochondrion. The Mitochondrial matrix portion of the chain corresponds to 24–48 (FENKVPEKQKLFQEDNGMPVHLKGG). K33 is subject to N6-acetyllysine. Residues 49–77 (ASDALLYRATMALTLGGTAYAIYLLAMAA) form a helical membrane-spanning segment. Topologically, residues 78 to 83 (FPKKQN) are mitochondrial intermembrane.

This sequence belongs to the cytochrome c oxidase VIIa family. Component of the cytochrome c oxidase (complex IV, CIV), a multisubunit enzyme composed of 14 subunits. The complex is composed of a catalytic core of 3 subunits MT-CO1, MT-CO2 and MT-CO3, encoded in the mitochondrial DNA, and 11 supernumerary subunits COX4I, COX5A, COX5B, COX6A, COX6B, COX6C, COX7A, COX7B, COX7C, COX8 and NDUFA4, which are encoded in the nuclear genome. The complex exists as a monomer or a dimer and forms supercomplexes (SCs) in the inner mitochondrial membrane with NADH-ubiquinone oxidoreductase (complex I, CI) and ubiquinol-cytochrome c oxidoreductase (cytochrome b-c1 complex, complex III, CIII), resulting in different assemblies (supercomplex SCI(1)III(2)IV(1) and megacomplex MCI(2)III(2)IV(2)). Interacts with PET100.

It localises to the mitochondrion inner membrane. Its pathway is energy metabolism; oxidative phosphorylation. Its function is as follows. Component of the cytochrome c oxidase, the last enzyme in the mitochondrial electron transport chain which drives oxidative phosphorylation. The respiratory chain contains 3 multisubunit complexes succinate dehydrogenase (complex II, CII), ubiquinol-cytochrome c oxidoreductase (cytochrome b-c1 complex, complex III, CIII) and cytochrome c oxidase (complex IV, CIV), that cooperate to transfer electrons derived from NADH and succinate to molecular oxygen, creating an electrochemical gradient over the inner membrane that drives transmembrane transport and the ATP synthase. Cytochrome c oxidase is the component of the respiratory chain that catalyzes the reduction of oxygen to water. Electrons originating from reduced cytochrome c in the intermembrane space (IMS) are transferred via the dinuclear copper A center (CU(A)) of subunit 2 and heme A of subunit 1 to the active site in subunit 1, a binuclear center (BNC) formed by heme A3 and copper B (CU(B)). The BNC reduces molecular oxygen to 2 water molecules using 4 electrons from cytochrome c in the IMS and 4 protons from the mitochondrial matrix. The polypeptide is Cytochrome c oxidase subunit 7A2, mitochondrial (Cox7a2) (Mus musculus (Mouse)).